A 519-amino-acid chain; its full sequence is Anthranilate synthase component 1 (519 aa).

L-tryptophan contacts are provided by residues Thr40 and 293–295 (PYM). 330–331 (GT) contributes to the chorismate binding site. Glu363 serves as a coordination point for Mg(2+). Residues Tyr451, Arg471, 485-487 (GSG), and Gly487 contribute to the chorismate site. Glu500 contributes to the Mg(2+) binding site.

The protein belongs to the anthranilate synthase component I family. Heterotetramer consisting of two non-identical subunits: a beta subunit (TrpG) and a large alpha subunit (TrpE). Mg(2+) serves as cofactor.

It catalyses the reaction chorismate + L-glutamine = anthranilate + pyruvate + L-glutamate + H(+). The protein operates within amino-acid biosynthesis; L-tryptophan biosynthesis; L-tryptophan from chorismate: step 1/5. Its activity is regulated as follows. Feedback inhibited by tryptophan. In terms of biological role, part of a heterotetrameric complex that catalyzes the two-step biosynthesis of anthranilate, an intermediate in the biosynthesis of L-tryptophan. In the first step, the glutamine-binding beta subunit (TrpG) of anthranilate synthase (AS) provides the glutamine amidotransferase activity which generates ammonia as a substrate that, along with chorismate, is used in the second step, catalyzed by the large alpha subunit of AS (TrpE) to produce anthranilate. In the absence of TrpG, TrpE can synthesize anthranilate directly from chorismate and high concentrations of ammonia. This Buchnera aphidicola subsp. Diuraphis noxia protein is Anthranilate synthase component 1 (trpE).